Consider the following 277-residue polypeptide: Large ribosomal subunit protein uL2c (277 aa).

The interval 226 to 249 is disordered; sequence NPIDHPHGGGEGRAPIGREKPLTP. The segment covering 229–246 has biased composition (basic and acidic residues); it reads DHPHGGGEGRAPIGREKP.

This sequence belongs to the universal ribosomal protein uL2 family. Part of the 50S ribosomal subunit.

Its subcellular location is the plastid. The protein localises to the chloroplast. The polypeptide is Large ribosomal subunit protein uL2c (rpl2) (Physcomitrium patens (Spreading-leaved earth moss)).